Reading from the N-terminus, the 357-residue chain is UDP-N-acetylglucosamine 2-epimerase homolog (357 aa).

It belongs to the UDP-N-acetylglucosamine 2-epimerase family.

In Methanococcus maripaludis (strain DSM 14266 / JCM 13030 / NBRC 101832 / S2 / LL), this protein is UDP-N-acetylglucosamine 2-epimerase homolog.